We begin with the raw amino-acid sequence, 296 residues long: MSAHIINGTEIAAAIREEIRSEVTALKTKAGIVPGLATVLVGDDPASHSYVDSKIKMCQNLGIYSEHHPLPQNATNEDLLTLIAKLNADPKISGILVQVPLPAQISESLVLNAINPDKDVDGFHPVNVGRMCLGEPCFLPCTPHGVQELLIRSGIKIEGTHVVIVGRSNLVGKPLANILLQKAPGANATVTICHSGTKNLPEITRQADILVAAMGKPKFITADMVREGAVVIDVGTTCIGYTPEGKRILSGDVDFEEVKEKAFAITPVPKGVGPMTIIMLMLNTLTAAKRAVGLIK.

Residues 166-168, S195, and T236 each bind NADP(+); that span reads GRS.

This sequence belongs to the tetrahydrofolate dehydrogenase/cyclohydrolase family. As to quaternary structure, homodimer.

The catalysed reaction is (6R)-5,10-methylene-5,6,7,8-tetrahydrofolate + NADP(+) = (6R)-5,10-methenyltetrahydrofolate + NADPH. It carries out the reaction (6R)-5,10-methenyltetrahydrofolate + H2O = (6R)-10-formyltetrahydrofolate + H(+). The protein operates within one-carbon metabolism; tetrahydrofolate interconversion. Functionally, catalyzes the oxidation of 5,10-methylenetetrahydrofolate to 5,10-methenyltetrahydrofolate and then the hydrolysis of 5,10-methenyltetrahydrofolate to 10-formyltetrahydrofolate. This is Bifunctional protein FolD from Dehalococcoides mccartyi (strain CBDB1).